The chain runs to 442 residues: D-serine dehydratase 2 (442 aa).

N6-(pyridoxal phosphate)lysine is present on K118.

Belongs to the serine/threonine dehydratase family. DsdA subfamily. In terms of assembly, monomer. It depends on pyridoxal 5'-phosphate as a cofactor.

The catalysed reaction is D-serine = pyruvate + NH4(+). This is D-serine dehydratase 2 from Escherichia coli O6:K15:H31 (strain 536 / UPEC).